The sequence spans 280 residues: Bifunctional protein FolD (280 aa).

NADP(+)-binding positions include 165 to 167 (GRS), Ser190, and Ile231.

It belongs to the tetrahydrofolate dehydrogenase/cyclohydrolase family. As to quaternary structure, homodimer.

The enzyme catalyses (6R)-5,10-methylene-5,6,7,8-tetrahydrofolate + NADP(+) = (6R)-5,10-methenyltetrahydrofolate + NADPH. It catalyses the reaction (6R)-5,10-methenyltetrahydrofolate + H2O = (6R)-10-formyltetrahydrofolate + H(+). The protein operates within one-carbon metabolism; tetrahydrofolate interconversion. Catalyzes the oxidation of 5,10-methylenetetrahydrofolate to 5,10-methenyltetrahydrofolate and then the hydrolysis of 5,10-methenyltetrahydrofolate to 10-formyltetrahydrofolate. In Moorella thermoacetica (strain ATCC 39073 / JCM 9320), this protein is Bifunctional protein FolD.